Consider the following 118-residue polypeptide: Large ribosomal subunit protein bL19 (118 aa).

The protein belongs to the bacterial ribosomal protein bL19 family.

This protein is located at the 30S-50S ribosomal subunit interface and may play a role in the structure and function of the aminoacyl-tRNA binding site. The protein is Large ribosomal subunit protein bL19 of Salinispora arenicola (strain CNS-205).